The chain runs to 196 residues: Shikimate kinase (196 aa).

Residue 32–37 (GAGKSA) participates in ATP binding. S36 serves as a coordination point for Mg(2+). Substrate contacts are provided by D54, R78, and G100. ATP is bound at residue R138. R157 is a binding site for substrate. R174 is an ATP binding site.

Belongs to the shikimate kinase family. Monomer. The cofactor is Mg(2+).

It localises to the cytoplasm. It carries out the reaction shikimate + ATP = 3-phosphoshikimate + ADP + H(+). It functions in the pathway metabolic intermediate biosynthesis; chorismate biosynthesis; chorismate from D-erythrose 4-phosphate and phosphoenolpyruvate: step 5/7. Its function is as follows. Catalyzes the specific phosphorylation of the 3-hydroxyl group of shikimic acid using ATP as a cosubstrate. In Rhizobium leguminosarum bv. trifolii (strain WSM2304), this protein is Shikimate kinase.